The primary structure comprises 448 residues: Mitochondrial distribution and morphology protein 10 (448 aa).

This sequence belongs to the MDM10 family. Component of the ER-mitochondria encounter structure (ERMES) or MDM complex, composed of MMM1, MDM10, MDM12 and MDM34. Associates with the mitochondrial outer membrane sorting assembly machinery SAM(core) complex.

It is found in the mitochondrion outer membrane. Component of the ERMES/MDM complex, which serves as a molecular tether to connect the endoplasmic reticulum and mitochondria. Components of this complex are involved in the control of mitochondrial shape and protein biogenesis and may function in phospholipid exchange. MDM10 is involved in the late assembly steps of the general translocase of the mitochondrial outer membrane (TOM complex). Functions in the TOM40-specific route of the assembly of outer membrane beta-barrel proteins, including the association of TOM40 with the receptor TOM22 and small TOM proteins. Can associate with the SAM(core) complex as well as the MDM12-MMM1 complex, both involved in late steps of the major beta-barrel assembly pathway, that is responsible for biogenesis of all outer membrane beta-barrel proteins. May act as a switch that shuttles between both complexes and channels precursor proteins into the TOM40-specific pathway. Plays a role in mitochondrial morphology and in the inheritance of mitochondria. In Podospora anserina (strain S / ATCC MYA-4624 / DSM 980 / FGSC 10383) (Pleurage anserina), this protein is Mitochondrial distribution and morphology protein 10.